The following is a 217-amino-acid chain: Outer-membrane lipoprotein LolB (217 aa).

The N-terminal stretch at 1–20 is a signal peptide; sequence MSKALRTLALSGLVLVGLSA. Cysteine 21 carries N-palmitoyl cysteine lipidation. Residue cysteine 21 is the site of S-diacylglycerol cysteine attachment.

This sequence belongs to the LolB family. Monomer.

The protein localises to the cell outer membrane. Its function is as follows. Plays a critical role in the incorporation of lipoproteins in the outer membrane after they are released by the LolA protein. The chain is Outer-membrane lipoprotein LolB from Xanthomonas oryzae pv. oryzae (strain MAFF 311018).